A 721-amino-acid polypeptide reads, in one-letter code: MNTSTSGKCPVMHGSMTTAERSVTEWWPNALNLDILHQHDTKPNPMGKDFDYREELKKLDVAALKKDLQALMTDSQDWWPADWGHYGGLMIRMAWHSAGSYRLFDGRGGGGTGNQRFAPLNSWPDNGNLDKARRLLWPIKKKYGNKLSWADLYILAGNVAYESMGLKTFGFAFGREDIWHPEKDVYWGSEKEWLAESVLRYANEEDPESLEAPLGAVHMGLIYVNPQGRDGKPDPLKSAHDVRVTFKRMAMNDEETAALTAGGHTVGKAHGNGLESNLSAPPEAADIEEQGFGWVNHKTRGVGRDTVTSGLEGAWTSKPTTFDMGYFDMLFGHEWELKKSPAGAWQWQPIDIKEEDMPVDVEDPSIRRMPIMTDADMAMKVDPIYREICERFRKDPEYFKDTFARAWFKLTHRDMGPKVRYVGPEVPAEDLIWQDPIPAGNTSYDVGAVKAKIAASGLSVSELVSTAWDSARTYRGSDMRGGANGARIRLAPQKDWVGNEPERLKKVLSMLEPIAKATGASLADVIVLAGNVGVEQAAKAAGFDIAVPFAPGRGDASAEQTDAESFEALEPLADAYRNFLKRDYELPPEELMLDRTQLMGLTGPEMTVLVGGMRVMGTNHGGTRHGVFTDREGALTNDFFVNLTDMGNSWVKNGGHYDVRDRKTGKTKWTATRVDLVFGSNSILRAYSEVYAQDDAKEKFVKDFVAAWTKVMNADRFDLKK.

The tryptophyl-tyrosyl-methioninium (Trp-Tyr) (with M-249) cross-link spans 95–223 (WHSAGSYRLF…LGAVHMGLIY (129 aa)). H96 acts as the Proton acceptor in catalysis. The segment at residues 223–249 (YVNPQGRDGKPDPLKSAHDVRVTFKRM) is a cross-link (tryptophyl-tyrosyl-methioninium (Tyr-Met) (with W-95)). Position 264 (H264) interacts with heme b.

The protein belongs to the peroxidase family. Peroxidase/catalase subfamily. As to quaternary structure, homodimer or homotetramer. Heme b serves as cofactor. In terms of processing, formation of the three residue Trp-Tyr-Met cross-link is important for the catalase, but not the peroxidase activity of the enzyme.

The catalysed reaction is H2O2 + AH2 = A + 2 H2O. It catalyses the reaction 2 H2O2 = O2 + 2 H2O. Its function is as follows. Bifunctional enzyme with both catalase and broad-spectrum peroxidase activity. In Parvibaculum lavamentivorans (strain DS-1 / DSM 13023 / NCIMB 13966), this protein is Catalase-peroxidase.